The primary structure comprises 37 residues: Photosystem I reaction center subunit VIII (37 aa).

The helical transmembrane segment at 9-29 (SIFVPLVGLVFPAIAMASLFL) threads the bilayer.

It belongs to the PsaI family.

It localises to the plastid. The protein localises to the chloroplast thylakoid membrane. In terms of biological role, may help in the organization of the PsaL subunit. In Cucumis sativus (Cucumber), this protein is Photosystem I reaction center subunit VIII.